We begin with the raw amino-acid sequence, 730 residues long: Multifunctional procollagen lysine hydroxylase and glycosyltransferase (730 aa).

The first 16 residues, 1–16 (MRVLPFLLPLIPVLLA), serve as a signal peptide directing secretion. The interval 20 to 280 (TDLPELVVVT…CGLEVKESEE (261 aa)) is required for glycosyltransferase activity. UDP-binding positions include 30–32 (VAT) and 98–100 (DAY). Mn(2+)-binding residues include aspartate 98, aspartate 101, and histidine 242. Residue 245–248 (GPSK) participates in UDP binding. Cysteine 268 and cysteine 271 form a disulfide bridge. The tract at residues 281–507 (VPLIALNLFI…YYGFLIVSDE (227 aa)) is accessory region. Residues cysteine 554 and cysteine 690 are joined by a disulfide bond. Residues arginine 590 and tyrosine 648 each coordinate 2-oxoglutarate. The Fe2OG dioxygenase domain maps to 639 to 730 (ESNMMFVVRY…RYIMVSFINP (92 aa)). Fe cation-binding residues include histidine 659 and aspartate 661. The segment at 664–707 (TFSIDIALNKKGRDYEGGGVRYIRYNCTVPADEVGYAMMFPGRL) is important for dimerization. The N-linked (GlcNAc...) asparagine glycan is linked to asparagine 689. Histidine 711 is a Fe cation binding site. 2-oxoglutarate is bound at residue arginine 721.

In terms of assembly, homodimer. The cofactor is Fe(2+). Requires L-ascorbate as cofactor. It depends on Mn(2+) as a cofactor.

It localises to the rough endoplasmic reticulum. The protein resides in the endoplasmic reticulum lumen. The protein localises to the endoplasmic reticulum membrane. It is found in the secreted. Its subcellular location is the extracellular space. It catalyses the reaction L-lysyl-[collagen] + 2-oxoglutarate + O2 = (5R)-5-hydroxy-L-lysyl-[collagen] + succinate + CO2. It carries out the reaction (5R)-5-hydroxy-L-lysyl-[collagen] + UDP-alpha-D-galactose = (5R)-5-O-(beta-D-galactosyl)-5-hydroxy-L-lysyl-[collagen] + UDP + H(+). The catalysed reaction is (5R)-5-O-(beta-D-galactosyl)-5-hydroxy-L-lysyl-[collagen] + UDP-alpha-D-glucose = (5R)-5-O-[alpha-D-glucosyl-(1-&gt;2)-beta-D-galactosyl]-5-hydroxy-L-lysyl-[collagen] + UDP + H(+). Its function is as follows. Multifunctional enzyme that catalyzes a series of post-translational modifications on Lys residues in procollagen. Catalyzes the formation of hydroxylysine residues in -Xaa-Lys-Gly- sequences in type IV collagens. Transfers galactose onto hydroxylysine groups, giving rise to galactosyl 5-hydroxylysine. Catalyzes the subsequent transfer of glucose moieties, giving rise to 1,2-glucosylgalactosyl-5-hydroxylysine residues. Essential for normal biosynthesis and secretion of type IV collagens. Essential for normal stability of the basement membrane. This chain is Multifunctional procollagen lysine hydroxylase and glycosyltransferase (let-268), found in Caenorhabditis elegans.